A 248-amino-acid chain; its full sequence is Ubiquinone/menaquinone biosynthesis C-methyltransferase UbiE (248 aa).

Residues Ser-68 and Asp-92 each coordinate S-adenosyl-L-methionine.

It belongs to the class I-like SAM-binding methyltransferase superfamily. MenG/UbiE family.

The catalysed reaction is a 2-demethylmenaquinol + S-adenosyl-L-methionine = a menaquinol + S-adenosyl-L-homocysteine + H(+). It catalyses the reaction a 2-methoxy-6-(all-trans-polyprenyl)benzene-1,4-diol + S-adenosyl-L-methionine = a 5-methoxy-2-methyl-3-(all-trans-polyprenyl)benzene-1,4-diol + S-adenosyl-L-homocysteine + H(+). The protein operates within quinol/quinone metabolism; menaquinone biosynthesis; menaquinol from 1,4-dihydroxy-2-naphthoate: step 2/2. Its pathway is cofactor biosynthesis; ubiquinone biosynthesis. Its function is as follows. Methyltransferase required for the conversion of demethylmenaquinol (DMKH2) to menaquinol (MKH2) and the conversion of 2-polyprenyl-6-methoxy-1,4-benzoquinol (DDMQH2) to 2-polyprenyl-3-methyl-6-methoxy-1,4-benzoquinol (DMQH2). This chain is Ubiquinone/menaquinone biosynthesis C-methyltransferase UbiE, found in Rickettsia massiliae (strain Mtu5).